The following is a 96-amino-acid chain: Large ribosomal subunit protein uL23 (96 aa).

Belongs to the universal ribosomal protein uL23 family. In terms of assembly, part of the 50S ribosomal subunit. Contacts protein L29, and trigger factor when it is bound to the ribosome.

Its function is as follows. One of the early assembly proteins it binds 23S rRNA. One of the proteins that surrounds the polypeptide exit tunnel on the outside of the ribosome. Forms the main docking site for trigger factor binding to the ribosome. The protein is Large ribosomal subunit protein uL23 of Desulfovibrio desulfuricans (strain ATCC 27774 / DSM 6949 / MB).